Consider the following 65-residue polypeptide: Ferredoxin soy (65 aa).

Positions 2–29 (GVQVDKERCVGAGMCALTAPDVFTQDDD) constitute a 4Fe-4S ferredoxin-type domain. Positions 10, 16, and 55 each coordinate [3Fe-4S] cluster.

It depends on [3Fe-4S] cluster as a cofactor.

Its function is as follows. Electron transport protein for the cytochrome P-450-SOY system. This chain is Ferredoxin soy (soyB), found in Streptomyces griseus.